Reading from the N-terminus, the 215-residue chain is Glycerol-3-phosphate acyltransferase (215 aa).

Helical transmembrane passes span 3-23, 42-61, 68-90, 110-130, 134-154, and 162-182; these read LILLILTAYLLGSIPTGLWIG, TNTFRILGLKAGAATLLIDI, TLLPVLVGASNVSPIAIGFFAVL, AGVLLGFAPLYLLFLAAVFVL, LFSMISLASLTASVVAVISVL, and LLPGYDWLLTITIVVLAAIII.

Belongs to the PlsY family. In terms of assembly, probably interacts with PlsX.

The protein localises to the cell membrane. It carries out the reaction an acyl phosphate + sn-glycerol 3-phosphate = a 1-acyl-sn-glycero-3-phosphate + phosphate. It functions in the pathway lipid metabolism; phospholipid metabolism. In terms of biological role, catalyzes the transfer of an acyl group from acyl-phosphate (acyl-PO(4)) to glycerol-3-phosphate (G3P) to form lysophosphatidic acid (LPA). This enzyme utilizes acyl-phosphate as fatty acyl donor, but not acyl-CoA or acyl-ACP. The chain is Glycerol-3-phosphate acyltransferase from Streptococcus equi subsp. zooepidemicus (strain MGCS10565).